The sequence spans 90 residues: Toxin 3FTx-Psa1 (90 aa).

The N-terminal stretch at 1-21 (MKTLPLVLAVVAFVYLDLAHT) is a signal peptide. Disulfide bonds link cysteine 24–cysteine 43, cysteine 36–cysteine 61, cysteine 65–cysteine 76, and cysteine 77–cysteine 82.

Belongs to the three-finger toxin family. Ancestral subfamily. As to expression, expressed by the venom gland.

The protein resides in the secreted. This Psammophis mossambicus (Olive sand snake) protein is Toxin 3FTx-Psa1.